We begin with the raw amino-acid sequence, 249 residues long: RNA polymerase sigma factor SigI3 (249 aa).

A Polymerase core binding motif is present at residues E60 to I73. Residues M199–K218 constitute a DNA-binding region (H-T-H motif).

This sequence belongs to the sigma-70 factor family. SigI subfamily. As to quaternary structure, interacts with RsgI3.

The protein resides in the cytoplasm. With respect to regulation, negatively regulated by the anti-sigma-I factor RsgI3. Binding of the polysaccharide substrate to RsgI3 may lead to the release and activation of SigI3. Functionally, sigma factors are initiation factors that promote the attachment of RNA polymerase to specific initiation sites and are then released. This sigma factor is involved in regulation of cellulosomal genes via an external polysaccharide-sensing mechanism. Recognizes the predicted promoters associated with sigI3 itself, pl11, ce12 and cipA. The chain is RNA polymerase sigma factor SigI3 from Acetivibrio thermocellus (strain ATCC 27405 / DSM 1237 / JCM 9322 / NBRC 103400 / NCIMB 10682 / NRRL B-4536 / VPI 7372) (Clostridium thermocellum).